A 458-amino-acid polypeptide reads, in one-letter code: Monomethylamine methyltransferase MtmB (458 aa).

Residue Pyl202 is a non-standard amino acid, pyrrolysine.

The protein belongs to the monomethylamine methyltransferase family. In terms of assembly, can form a complex with MtmC.

The catalysed reaction is Co(I)-[methylamine-specific corrinoid protein] + methylamine + H(+) = methyl-Co(III)-[methylamine-specific corrinoid protein] + NH4(+). Its pathway is one-carbon metabolism; methanogenesis from methylamine. Its function is as follows. Catalyzes the transfer of the methyl group from monomethylamine to the corrinoid cofactor of MtmC. The protein is Monomethylamine methyltransferase MtmB (mtmB1) of Methanosarcina mazei (strain ATCC BAA-159 / DSM 3647 / Goe1 / Go1 / JCM 11833 / OCM 88) (Methanosarcina frisia).